Reading from the N-terminus, the 362-residue chain is Nicotinate-nucleotide--dimethylbenzimidazole phosphoribosyltransferase (362 aa).

The active-site Proton acceptor is the E321.

The protein belongs to the CobT family.

The enzyme catalyses 5,6-dimethylbenzimidazole + nicotinate beta-D-ribonucleotide = alpha-ribazole 5'-phosphate + nicotinate + H(+). It participates in nucleoside biosynthesis; alpha-ribazole biosynthesis; alpha-ribazole from 5,6-dimethylbenzimidazole: step 1/2. Catalyzes the synthesis of alpha-ribazole-5'-phosphate from nicotinate mononucleotide (NAMN) and 5,6-dimethylbenzimidazole (DMB). In Clostridium tetani (strain Massachusetts / E88), this protein is Nicotinate-nucleotide--dimethylbenzimidazole phosphoribosyltransferase.